The primary structure comprises 108 residues: Replication initiation control protein YabA (108 aa).

His83, Cys85, Cys99, and Cys102 together coordinate Zn(2+).

Belongs to the YabA family. As to quaternary structure, homotetramer. Interacts with both DnaA and DnaN, acting as a bridge between these two proteins. The cofactor is Zn(2+).

The protein localises to the cytoplasm. It is found in the nucleoid. Functionally, involved in control of chromosome replication initiation. Inhibits the cooperative binding of DnaA to the oriC region, thus negatively regulating initiation of chromosome replication. Inhibits the ability of DnaA-ATP to form a helix on DNA; does not disassemble preformed DnaA-DNA helices. Decreases the residence time of DnaA on the chromosome at its binding sites (oriC, replication forks and promoter-binding sites). Tethers DnaA to the replication machinery via the DNA polymerase beta sliding clamp subunit (dnaN). Associates with oriC and other DnaA targets on the chromosome in a DnaA-dependent manner. This chain is Replication initiation control protein YabA, found in Lactococcus lactis subsp. cremoris (strain SK11).